A 406-amino-acid polypeptide reads, in one-letter code: Tryptophan synthase beta chain (406 aa).

Lys99 carries the N6-(pyridoxal phosphate)lysine modification.

This sequence belongs to the TrpB family. In terms of assembly, tetramer of two alpha and two beta chains. Requires pyridoxal 5'-phosphate as cofactor.

It catalyses the reaction (1S,2R)-1-C-(indol-3-yl)glycerol 3-phosphate + L-serine = D-glyceraldehyde 3-phosphate + L-tryptophan + H2O. Its pathway is amino-acid biosynthesis; L-tryptophan biosynthesis; L-tryptophan from chorismate: step 5/5. Functionally, the beta subunit is responsible for the synthesis of L-tryptophan from indole and L-serine. The sequence is that of Tryptophan synthase beta chain from Sinorhizobium fredii (strain NBRC 101917 / NGR234).